The primary structure comprises 425 residues: D-arabinitol transporter (425 aa).

Residues 1 to 7 (MSINNKQ) lie on the Cytoplasmic side of the membrane. The helical transmembrane segment at 8–28 (WLGLPLNLLWGYIAIAVFMTG) threads the bilayer. The Extracellular portion of the chain corresponds to 29 to 51 (DGFELAFLSHYIKALGFSPAEAS). A helical transmembrane segment spans residues 52–72 (FAFTLYGLAAALSAWISGVVA). At 73 to 80 (EIITPLKT) the chain is on the cytoplasmic side. The helical transmembrane segment at 81 to 101 (MMIGFVLWCVFHVLFLVFGLG) threads the bilayer. The Extracellular portion of the chain corresponds to 102-107 (HANYAL). The helical transmembrane segment at 108 to 128 (ILLFYGIRGFAYPLFLYSFIV) threads the bilayer. Residues 129–141 (AIVHNVKSDNASS) lie on the Cytoplasmic side of the membrane. The chain crosses the membrane as a helical span at residues 142–162 (AIGWFWAVYSIGIGVFGSYIP). The Extracellular segment spans residues 163–172 (SFTIPHIGEM). A helical transmembrane segment spans residues 173-193 (GTLWLALAFCLTGGVIALVSL). Residues 194 to 237 (RHIQTPQHMQNLTTREKFSELGRAATLLYTNRNILLSSMVRIIN) are Cytoplasmic-facing. A helical transmembrane segment spans residues 238 to 258 (TLSLFGFAVIMPMMFVDELGF). Residues 259–263 (STSEW) are Extracellular-facing. A helical transmembrane segment spans residues 264 to 284 (LQVWAVFFFTTIFSNVLWGIL). The Cytoplasmic segment spans residues 285–295 (GEKLGWMKVVR). Residues 296–316 (WFGCIGMALSSLAFYYIPQHF) form a helical membrane-spanning segment. At 317 to 323 (GHSFAMA) the chain is on the extracellular side. A helical membrane pass occupies residues 324 to 344 (LIPAIALGIFVAAFVPLAAVF). Topologically, residues 345 to 360 (PALEPKHKGAAISVYN) are cytoplasmic. The chain crosses the membrane as a helical span at residues 361–381 (LSAGMSNFLAPAIAVVLLPFF). The Extracellular segment spans residues 382 to 383 (ST). A helical membrane pass occupies residues 384–404 (IGVVIAYTALYVVAFFLCAFI). Topologically, residues 405–425 (RVEQPGFSHKEATAREQVEFS) are cytoplasmic.

It belongs to the major facilitator superfamily. Sugar transporter (TC 2.A.1.1) family. CsbX subfamily.

Its subcellular location is the cell membrane. This Klebsiella pneumoniae protein is D-arabinitol transporter (dalT).